The primary structure comprises 474 residues: Peroxisome proliferator-activated receptor alpha (474 aa).

The segment at residues 106 to 180 (NLECRVCSDK…VGMSHNAIRF (75 aa)) is a DNA-binding region (nuclear receptor). NR C4-type zinc fingers lie at residues 109–129 (CRVCSDKASGFHYGVHACEGC) and 146–168 (CERMCKIQKKNRNKCQYCRFEKC). Positions 245 to 472 (FVIHDMETLC…HPLLQEIYRD (228 aa)) constitute an NR LBD domain.

Belongs to the nuclear hormone receptor family. NR1 subfamily. In terms of assembly, heterodimer with the retinoid X receptor. As to expression, ubiquitous.

It is found in the nucleus. In terms of biological role, ligand-activated transcription factor. Key regulator of lipid metabolism. Activated by lipids. Receptor for peroxisome proliferators such as hypolipidemic drugs and fatty acids. Once activated by a ligand, the receptor binds to promoter elements of target genes. Regulates the peroxisomal beta-oxidation pathway of fatty acids. The sequence is that of Peroxisome proliferator-activated receptor alpha (ppara) from Xenopus laevis (African clawed frog).